Reading from the N-terminus, the 90-residue chain is Molybdopterin synthase sulfur carrier subunit (90 aa).

At Gly-90 the chain carries 1-thioglycine; alternate. Gly-90 bears the Glycyl adenylate; alternate mark.

The protein belongs to the MoaD family. MOCS2A subfamily. Heterotetramer; composed of 2 small (Mocs2A) and 2 large (Mocs2B) subunits. In terms of processing, C-terminal thiocarboxylation occurs in 2 steps, it is first acyl-adenylated (-COAMP) via the hesA/moeB/thiF part of MOCS3, then thiocarboxylated (-COSH) via the rhodanese domain of MOCS3.

The protein localises to the cytoplasm. The protein operates within cofactor biosynthesis; molybdopterin biosynthesis. In terms of biological role, acts as a sulfur carrier required for molybdopterin biosynthesis. Component of the molybdopterin synthase complex that catalyzes the conversion of precursor Z into molybdopterin by mediating the incorporation of 2 sulfur atoms into precursor Z to generate a dithiolene group. In the complex, serves as sulfur donor by being thiocarboxylated (-COSH) at its C-terminus by MOCS3. After interaction with Mocs2B, the sulfur is then transferred to precursor Z to form molybdopterin. The chain is Molybdopterin synthase sulfur carrier subunit from Drosophila simulans (Fruit fly).